A 100-amino-acid chain; its full sequence is Large ribosomal subunit protein uL23 (100 aa).

Belongs to the universal ribosomal protein uL23 family. Part of the 50S ribosomal subunit. Contacts protein L29, and trigger factor when it is bound to the ribosome.

Functionally, one of the early assembly proteins it binds 23S rRNA. One of the proteins that surrounds the polypeptide exit tunnel on the outside of the ribosome. Forms the main docking site for trigger factor binding to the ribosome. This is Large ribosomal subunit protein uL23 from Prochlorococcus marinus (strain MIT 9312).